Here is a 666-residue protein sequence, read N- to C-terminus: Probable potassium transport system protein Kup (666 aa).

Transmembrane regions (helical) follow at residues glycine 16–methionine 36, isoleucine 58–leucine 78, threonine 99–leucine 119, isoleucine 141–alanine 161, threonine 167–isoleucine 187, isoleucine 221–leucine 241, tryptophan 253–alanine 273, phenylalanine 292–isoleucine 312, threonine 343–phenylalanine 363, tyrosine 373–isoleucine 393, valine 402–valine 422, and phenylalanine 424–isoleucine 444.

Belongs to the HAK/KUP transporter (TC 2.A.72) family.

The protein resides in the cell membrane. The enzyme catalyses K(+)(in) + H(+)(in) = K(+)(out) + H(+)(out). Its function is as follows. Transport of potassium into the cell. Likely operates as a K(+):H(+) symporter. This chain is Probable potassium transport system protein Kup, found in Streptococcus agalactiae serotype III (strain NEM316).